The sequence spans 282 residues: Armadillo repeat-containing protein 1 (282 aa).

Residue M1 is modified to N-acetylmethionine. The ARM repeat unit spans residues 39–81; sequence GCLPGLILFMDHPNPPVVHSALLALRYLAECRANREKMKGELG. T137 carries the phosphothreonine modification. A phosphoserine mark is found at S189, S246, S260, and S267. Residues 239–261 form a disordered region; that stretch reads DYLPEDESPTKEQDKAVSRVGSH. Residues 246–255 are compositionally biased toward basic and acidic residues; the sequence is SPTKEQDKAV.

As to quaternary structure, interacts with mitochondrial contact site and cristae organizing system (MICOS) complex components IMMT/MIC60 and MICOS10/MIC10. Interacts with mitochondrial outer membrane sorting assembly machinery (SAM) complex components SAMM50 and MTX1.

Its subcellular location is the cytoplasm. The protein resides in the mitochondrion. It localises to the mitochondrion outer membrane. Functionally, in association with mitochondrial contact site and cristae organizing system (MICOS) complex components and mitochondrial outer membrane sorting assembly machinery (SAM) complex components may regulate mitochondrial dynamics playing a role in determining mitochondrial length, distribution and motility. The polypeptide is Armadillo repeat-containing protein 1 (ARMC1) (Bos taurus (Bovine)).